We begin with the raw amino-acid sequence, 444 residues long: Phosphomethylpyrimidine synthase (444 aa).

Residues Asn-80, Met-109, Tyr-138, His-174, 194-196, 235-238, and Glu-274 contribute to the substrate site; these read SRG and DSLR. His-278 serves as a coordination point for Zn(2+). Tyr-301 provides a ligand contact to substrate. His-342 serves as a coordination point for Zn(2+). [4Fe-4S] cluster is bound by residues Cys-422, Cys-425, and Cys-430.

The protein belongs to the ThiC family. Homodimer. [4Fe-4S] cluster is required as a cofactor.

The enzyme catalyses 5-amino-1-(5-phospho-beta-D-ribosyl)imidazole + S-adenosyl-L-methionine = 4-amino-2-methyl-5-(phosphooxymethyl)pyrimidine + CO + 5'-deoxyadenosine + formate + L-methionine + 3 H(+). It functions in the pathway cofactor biosynthesis; thiamine diphosphate biosynthesis. Catalyzes the synthesis of the hydroxymethylpyrimidine phosphate (HMP-P) moiety of thiamine from aminoimidazole ribotide (AIR) in a radical S-adenosyl-L-methionine (SAM)-dependent reaction. In Nitratiruptor sp. (strain SB155-2), this protein is Phosphomethylpyrimidine synthase.